The following is a 174-amino-acid chain: MIDSDGFRANVGIIICNRFGQVMWARRFGQHSWQFPQGGVDEGESAEQAMYRELYEEVGLRPEHVQVLTSTRSWLRYRLPKRLIRQDSKPLCIGQKQKWFLLQLKSQESAIDLAASGHPEFDDWRWVSYWYPVRQVVSFKRDVYRKVMKEFAPTALPFQAQENTQGGRRRGRRR.

The Nudix hydrolase domain occupies 6–149; it reads GFRANVGIII…KRDVYRKVMK (144 aa). Positions 38–59 match the Nudix box motif; sequence GGVDEGESAEQAMYRELYEEVG.

Belongs to the Nudix hydrolase family. RppH subfamily. It depends on a divalent metal cation as a cofactor.

Accelerates the degradation of transcripts by removing pyrophosphate from the 5'-end of triphosphorylated RNA, leading to a more labile monophosphorylated state that can stimulate subsequent ribonuclease cleavage. The sequence is that of RNA pyrophosphohydrolase from Shewanella loihica (strain ATCC BAA-1088 / PV-4).